The following is an 805-amino-acid chain: Sucrose synthase (805 aa).

The GT-B glycosyltransferase stretch occupies residues 275 to 752 (MVFNVVILSP…GLQRIEEKYT (478 aa)).

The protein belongs to the glycosyltransferase 1 family. Plant sucrose synthase subfamily.

It carries out the reaction an NDP-alpha-D-glucose + D-fructose = a ribonucleoside 5'-diphosphate + sucrose + H(+). In terms of biological role, sucrose-cleaving enzyme that provides UDP-glucose and fructose for various metabolic pathways. The protein is Sucrose synthase (SS1) of Vigna radiata var. radiata (Mung bean).